The sequence spans 505 residues: Glucan endo-1,3-beta-glucosidase 2 (505 aa).

The first 20 residues, Met1–Ala20, serve as a signal peptide directing secretion. Asn97 carries N-linked (GlcNAc...) asparagine glycosylation. Glu125 serves as the catalytic Proton donor. N-linked (GlcNAc...) asparagine glycosylation is found at Asn180 and Asn262. Residue Glu272 is the Nucleophile of the active site. Residues Asn304, Asn361, and Asn365 are each glycosylated (N-linked (GlcNAc...) asparagine). A disulfide bond links Cys369 and Cys432. Asn461, Asn466, and Asn473 each carry an N-linked (GlcNAc...) asparagine glycan. Ser477 carries GPI-anchor amidated serine lipidation. Positions Ser478–Leu505 are cleaved as a propeptide — removed in mature form.

Belongs to the glycosyl hydrolase 17 family. In terms of processing, contains two additional disulfide bonds.

The protein resides in the cell membrane. The enzyme catalyses Hydrolysis of (1-&gt;3)-beta-D-glucosidic linkages in (1-&gt;3)-beta-D-glucans.. In Arabidopsis thaliana (Mouse-ear cress), this protein is Glucan endo-1,3-beta-glucosidase 2.